A 157-amino-acid chain; its full sequence is Thiosulfate sulfurtransferase/rhodanese-like domain-containing protein 3 (157 aa).

Residues 52–154 enclose the Rhodanese domain; that stretch reads NSKDIMLIDV…WVTYEISEEK (103 aa). The residue at position 96 (Lys-96) is an N6-succinyllysine. Residue Cys-114 is the Cysteine persulfide intermediate of the active site.

The protein is Thiosulfate sulfurtransferase/rhodanese-like domain-containing protein 3 (Tstd3) of Mus musculus (Mouse).